The primary structure comprises 218 residues: 3-phospho-D-glycerate guanylyltransferase (218 aa).

Belongs to the CofC family.

It catalyses the reaction (2R)-3-phosphoglycerate + GTP + H(+) = 3-[(R)-glyceryl]-diphospho-5'-guanosine + diphosphate. Its pathway is cofactor biosynthesis; coenzyme F420 biosynthesis. Functionally, guanylyltransferase that catalyzes the activation of (2R)-3-phosphoglycerate (3PG) as 3-[(R)-glyceryl]-diphospho-5'-guanosine, via the condensation of 3PG with GTP. It is involved in the biosynthesis of a derivative of the hydride carrier cofactor coenzyme F420, 3PG-F420. The chain is 3-phospho-D-glycerate guanylyltransferase from Phenylobacterium zucineum (strain HLK1).